The sequence spans 1386 residues: Rab3 GTPase-activating protein non-catalytic subunit (1386 aa).

The tract at residues 31–69 (GALRRDPSKTSNWEDDSWGAWEETEPQEPEEEGNTSKTQ) is disordered. Position 38 is a phosphoserine (Ser38). The segment covering 43 to 63 (WEDDSWGAWEETEPQEPEEEG) has biased composition (acidic residues). At Ser448 the chain carries Phosphoserine. Thr899 is modified (phosphothreonine). A Phosphoserine modification is found at Ser914. Over residues 959–973 (REKDVENPDEPREGI) the composition is skewed to basic and acidic residues. The tract at residues 959 to 982 (REKDVENPDEPREGIARSPPEVSE) is disordered. Ser976 carries the phosphoserine modification.

This sequence belongs to the Rab3-GAP regulatory subunit family. In terms of assembly, the Rab3 GTPase-activating complex is a heterodimer composed of Rab3gap1 and Rab3gap2. The Rab3 GTPase-activating complex interacts with DMXL2. Interacts with LMAN1.

It localises to the cytoplasm. The protein localises to the endoplasmic reticulum. Regulatory subunit of the Rab3 GTPase-activating (Rab3GAP) complex composed of RAB3GAP1 and RAB3GAP2, which has GTPase-activating protein (GAP) activity towards various Rab3 subfamily members (RAB3A, RAB3B, RAB3C and RAB3D), RAB5A and RAB43, and guanine nucleotide exchange factor (GEF) activity towards RAB18. As part of the Rab3GAP complex, acts as a GAP for Rab3 proteins by converting active RAB3-GTP to the inactive form RAB3-GDP. Rab3 proteins are involved in regulated exocytosis of neurotransmitters and hormones. The Rab3GAP complex acts as a GEF for RAB18 by promoting the conversion of inactive RAB18-GDP to the active form RAB18-GTP. Recruits and stabilizes RAB18 at the cis-Golgi membrane in fibroblasts where RAB18 is most likely activated. Also involved in RAB18 recruitment at the endoplasmic reticulum (ER) membrane where it maintains proper ER structure. Required for normal eye and brain development. May participate in neurodevelopmental processes such as proliferation, migration and differentiation before synapse formation, and non-synaptic vesicular release of neurotransmitters. This chain is Rab3 GTPase-activating protein non-catalytic subunit, found in Rattus norvegicus (Rat).